Here is a 327-residue protein sequence, read N- to C-terminus: Lipoyl synthase (327 aa).

[4Fe-4S] cluster-binding residues include cysteine 74, cysteine 79, cysteine 85, cysteine 100, cysteine 104, cysteine 107, and serine 314. The 218-residue stretch at 86–303 folds into the Radical SAM core domain; that stretch reads FSGGTATFMI…AEEGEKMGFK (218 aa).

The protein belongs to the radical SAM superfamily. Lipoyl synthase family. It depends on [4Fe-4S] cluster as a cofactor.

It is found in the cytoplasm. The enzyme catalyses [[Fe-S] cluster scaffold protein carrying a second [4Fe-4S](2+) cluster] + N(6)-octanoyl-L-lysyl-[protein] + 2 oxidized [2Fe-2S]-[ferredoxin] + 2 S-adenosyl-L-methionine + 4 H(+) = [[Fe-S] cluster scaffold protein] + N(6)-[(R)-dihydrolipoyl]-L-lysyl-[protein] + 4 Fe(3+) + 2 hydrogen sulfide + 2 5'-deoxyadenosine + 2 L-methionine + 2 reduced [2Fe-2S]-[ferredoxin]. It functions in the pathway protein modification; protein lipoylation via endogenous pathway; protein N(6)-(lipoyl)lysine from octanoyl-[acyl-carrier-protein]: step 2/2. Its function is as follows. Catalyzes the radical-mediated insertion of two sulfur atoms into the C-6 and C-8 positions of the octanoyl moiety bound to the lipoyl domains of lipoate-dependent enzymes, thereby converting the octanoylated domains into lipoylated derivatives. In Pseudomonas aeruginosa (strain LESB58), this protein is Lipoyl synthase.